A 240-amino-acid chain; its full sequence is Putative exosome complex component RRP41 (240 aa).

The protein belongs to the RNase PH family. As to quaternary structure, component of the RNA exosome complex.

Its subcellular location is the cytoplasm. It is found in the nucleus. The protein resides in the nucleolus. The protein localises to the nucleoplasm. In terms of biological role, non-catalytic component of the RNA exosome complex which has 3'-&gt;5' exoribonuclease activity and participates in a multitude of cellular RNA processing and degradation events. In Caenorhabditis briggsae, this protein is Putative exosome complex component RRP41 (exos-4.1).